Consider the following 1355-residue polypeptide: DNA-directed RNA polymerase subunit beta' (1355 aa).

Cysteine 219, cysteine 293, cysteine 300, and cysteine 303 together coordinate Zn(2+). Residues 1331–1355 (AEVEVDDEVDDDYEDDDEDDDDYED) form a disordered region.

It belongs to the RNA polymerase beta' chain family. RpoC2 subfamily. As to quaternary structure, in cyanobacteria the RNAP catalytic core is composed of 2 alpha, 1 beta, 1 beta', 1 gamma and 1 omega subunit. When a sigma factor is associated with the core the holoenzyme is formed, which can initiate transcription. It depends on Zn(2+) as a cofactor.

The enzyme catalyses RNA(n) + a ribonucleoside 5'-triphosphate = RNA(n+1) + diphosphate. Its function is as follows. DNA-dependent RNA polymerase catalyzes the transcription of DNA into RNA using the four ribonucleoside triphosphates as substrates. The sequence is that of DNA-directed RNA polymerase subunit beta' from Trichormus variabilis (strain ATCC 29413 / PCC 7937) (Anabaena variabilis).